The primary structure comprises 419 residues: Putative polyketide beta-ketoacyl synthase 2 (419 aa).

Positions 10 to 413 (TRRTAVTGIG…GSNAALVLRP (404 aa)) constitute a Ketosynthase family 3 (KS3) domain.

The protein belongs to the thiolase-like superfamily. Beta-ketoacyl-ACP synthases family.

The protein operates within antibiotic biosynthesis; curamycin biosynthesis. This chain is Putative polyketide beta-ketoacyl synthase 2 (curB), found in Streptomyces cyaneus (Streptomyces curacoi).